The following is an 892-amino-acid chain: Alanine--tRNA ligase (892 aa).

Zn(2+)-binding residues include His-594, His-598, Cys-702, and His-706.

It belongs to the class-II aminoacyl-tRNA synthetase family. Requires Zn(2+) as cofactor.

It localises to the cytoplasm. The enzyme catalyses tRNA(Ala) + L-alanine + ATP = L-alanyl-tRNA(Ala) + AMP + diphosphate. Functionally, catalyzes the attachment of alanine to tRNA(Ala) in a two-step reaction: alanine is first activated by ATP to form Ala-AMP and then transferred to the acceptor end of tRNA(Ala). Also edits incorrectly charged Ser-tRNA(Ala) and Gly-tRNA(Ala) via its editing domain. The polypeptide is Alanine--tRNA ligase (Pyrobaculum aerophilum (strain ATCC 51768 / DSM 7523 / JCM 9630 / CIP 104966 / NBRC 100827 / IM2)).